A 691-amino-acid chain; its full sequence is F-box/LRR-repeat protein 5 (691 aa).

The tract at residues 1–159 (MAPFPEEVDV…IKKKVIAQHC (159 aa)) is hemerythrin-like. Fe(3+) is bound by residues His-15, His-57, Glu-58, Glu-61, His-80, His-126, and Glu-130. The F-box domain maps to 202–248 (STGITHLPPEVMLSIFSYLNPQELCRCSQVSMKWSQLTKTGSLWKHL). 7 LRR repeats span residues 340 to 364 (SSAV…LDLT), 365 to 392 (QTDI…DLSG), 393 to 418 (CEKI…QSGF), 479 to 508 (LWML…CVVE), 576 to 607 (TRLP…SLSG), 608 to 635 (CYQI…NLSG), and 636 to 661 (CLTI…YFYY). Residues Cys-662, Cys-676, Cys-686, and Cys-687 each coordinate [2Fe-2S] cluster.

In terms of assembly, part of a SCF (SKP1-cullin-F-box) protein ligase complex. Interacts with ACO1/IRP1, IREB2/IRP2; the interaction depends on the [2Fe-2S] cluster. Interacts with DCTN1/p150-glued. The cofactor is [2Fe-2S] cluster. Polybiquitinated upon iron and oxygen depletion, leading to its degradation by the proteasome. Ubiquitination is regulated by the hemerythrin-like region that acts as an oxygen and iron sensor. Undergoes constitutive ubiquitin-dependent degradation at the steady state by HERC2.

Its subcellular location is the cytoplasm. The protein resides in the perinuclear region. The protein localises to the nucleus. It participates in protein modification; protein ubiquitination. An iron-sulfur cluster promotes IRP2 polyubiquitination and degradation in response to both iron and oxygen concentrations. Its function is as follows. Component of some SCF (SKP1-cullin-F-box) protein ligase complex that plays a central role in iron homeostasis by promoting the ubiquitination and subsequent degradation of IREB2/IRP2. The C-terminal domain of FBXL5 contains a redox-sensitive [2Fe-2S] cluster that, upon oxidation, promotes binding to IRP2 to effect its oxygen-dependent degradation. Under iron deficiency conditions, the N-terminal hemerythrin-like (Hr) region, which contains a diiron metal center, cannot bind iron and undergoes conformational changes that destabilize the FBXL5 protein and cause its ubiquitination and degradation. When intracellular iron levels start rising, the Hr region is stabilized. Additional increases in iron levels facilitate the assembly and incorporation of a redox active [2Fe-2S] cluster in the C-terminal domain. Only when oxygen level is high enough to maintain the cluster in its oxidized state can FBXL5 recruit IRP2 as a substrate for polyubiquination and degradation. Promotes ubiquitination and subsequent degradation of the dynactin complex component DCTN1. Within the nucleus, promotes the ubiquitination of SNAI1; preventing its interaction with DNA and promoting its degradation. Negatively regulates DNA damage response by mediating the ubiquitin-proteasome degradation of the DNA repair protein NABP2. This is F-box/LRR-repeat protein 5 (FBXL5) from Pongo abelii (Sumatran orangutan).